The primary structure comprises 409 residues: tRNA-specific 2-thiouridylase MnmA (409 aa).

Residues 20–27 (AMSGGVDS) and L46 each bind ATP. Catalysis depends on C114, which acts as the Nucleophile. C114 and C210 are oxidised to a cystine. Residue G138 participates in ATP binding. An interaction with tRNA region spans residues 160–162 (RDQ). C210 functions as the Cysteine persulfide intermediate in the catalytic mechanism.

Belongs to the MnmA/TRMU family.

Its subcellular location is the cytoplasm. The catalysed reaction is S-sulfanyl-L-cysteinyl-[protein] + uridine(34) in tRNA + AH2 + ATP = 2-thiouridine(34) in tRNA + L-cysteinyl-[protein] + A + AMP + diphosphate + H(+). Its function is as follows. Catalyzes the 2-thiolation of uridine at the wobble position (U34) of tRNA, leading to the formation of s(2)U34. This is tRNA-specific 2-thiouridylase MnmA from Bartonella henselae (strain ATCC 49882 / DSM 28221 / CCUG 30454 / Houston 1) (Rochalimaea henselae).